The primary structure comprises 379 residues: L-lactate dehydrogenase (379 aa).

Positions Met1 to Leu379 constitute an FMN hydroxy acid dehydrogenase domain. Tyr24 lines the substrate pocket. FMN is bound by residues Ser106 and Gln127. Residue Tyr129 participates in substrate binding. FMN is bound at residue Thr155. Arg164 is a binding site for substrate. Residue Lys251 participates in FMN binding. Residue His275 is the Proton acceptor of the active site. Arg278 is a binding site for substrate. Residue Asp306 to Arg330 coordinates FMN.

It belongs to the FMN-dependent alpha-hydroxy acid dehydrogenase family. It depends on FMN as a cofactor.

It localises to the cell inner membrane. The enzyme catalyses (S)-lactate + A = pyruvate + AH2. Functionally, catalyzes the conversion of L-lactate to pyruvate. Is coupled to the respiratory chain. This is L-lactate dehydrogenase from Allorhizobium ampelinum (strain ATCC BAA-846 / DSM 112012 / S4) (Agrobacterium vitis (strain S4)).